Here is a 654-residue protein sequence, read N- to C-terminus: Polyvinylalcohol dehydrogenase (654 aa).

The N-terminal stretch at 1-32 (MGSHAWGGAVFSAATLIAFGSVVHASGTVAET) is a signal peptide. The Cytochrome c domain maps to 42 to 159 (ADQLDGETLY…AANQWNGWST (118 aa)). Heme c-binding residues include Cys55, Cys58, and His59.

Belongs to the bacterial PQQ dehydrogenase family. In terms of assembly, monomer. Requires pyrroloquinoline quinone as cofactor.

The protein localises to the periplasm. The enzyme catalyses a polyvinyl alcohol + 2n Fe(III)-[cytochrome c] = an oxidized polyvinyl alcohol + 2n Fe(II)-[cytochrome c] + 2n H(+). Functionally, catalyzes the oxidation of polyvinyl alcohol (PVA) in the polyvinyl alcohol degradation pathway. This is Polyvinylalcohol dehydrogenase (pvadh) from Sphingopyxis sp. (strain 113P3).